Consider the following 376-residue polypeptide: Thymidine kinase (376 aa).

The interval 1 to 47 is disordered; sequence MASHAGQQHAPAFGQAARASGPTDGRAASRPSHRQGASEARGDPELP. Residue 56-63 coordinates ATP; that stretch reads GPHGVGKT. Glu-84 serves as the catalytic Proton acceptor. The substrate site is built by Tyr-102 and Gln-126. Position 217 (Arg-217) interacts with ATP. Position 223 (Arg-223) interacts with substrate.

This sequence belongs to the herpesviridae thymidine kinase family. Homodimer.

It carries out the reaction thymidine + ATP = dTMP + ADP + H(+). Catalyzes the transfer of the gamma-phospho group of ATP to thymidine to generate dTMP in the salvage pathway of pyrimidine synthesis. The dTMP serves as a substrate for DNA polymerase during viral DNA replication. Allows the virus to be reactivated and to grow in non-proliferative cells lacking a high concentration of phosphorylated nucleic acid precursors. This is Thymidine kinase from Human herpesvirus 2 (strain 333) (HHV-2).